Reading from the N-terminus, the 245-residue chain is Type II restriction enzyme EcoRV (245 aa).

E45, D74, and D90 together coordinate Mg(2+). Catalysis depends on residues D74, D90, and K92.

Homodimer. It depends on Mg(2+) as a cofactor.

It catalyses the reaction Endonucleolytic cleavage of DNA to give specific double-stranded fragments with terminal 5'-phosphates.. Functionally, a P subtype restriction enzyme that recognizes the double-stranded sequence 5'-GATATC-3' and cleaves after T-3. The chain is Type II restriction enzyme EcoRV (ecoRVR) from Escherichia coli.